The sequence spans 224 residues: Oxygen-evolving enhancer protein 3-1, chloroplastic (224 aa).

The transit peptide at 1 to 44 (MASMGGLHGASPAVLEGSLKINGSSRLNGSGRVAVAQRSRLVVR) directs the protein to the chloroplast. A thylakoid-targeting transit peptide spans 45-75 (AQQSEETSRRSVIGLVAAGLAGGSFVQAVLA). The residue at position 189 (Thr-189) is a Phosphothreonine. Tyr-209 is subject to Phosphotyrosine. Residue Thr-212 is modified to Phosphothreonine.

Belongs to the PsbQ family. As to expression, expressed in green tissue, with high steady-state mRNA levels in leaves. Not expressed in roots.

It localises to the plastid. The protein resides in the chloroplast thylakoid membrane. Functionally, required for photosystem II assembly/stability and photoautotrophic growth under low light conditions. This is Oxygen-evolving enhancer protein 3-1, chloroplastic (PSBQ1) from Arabidopsis thaliana (Mouse-ear cress).